Consider the following 369-residue polypeptide: Phosphate-binding protein PstS 3 (369 aa).

The signal sequence occupies residues 1–21 (MKLNQFGAAIGLLATGALLSG). The N-palmitoyl cysteine moiety is linked to residue Cys22. Cys22 carries the S-diacylglycerol cysteine lipid modification. Residues 55 to 57 (STA), Ser85, Asp103, and 190 to 192 (SGT) contribute to the phosphate site.

This sequence belongs to the PstS family. The complex is composed of two ATP-binding proteins (PstB), two transmembrane proteins (PstC and PstA) and a solute-binding protein (PstS).

The protein localises to the cell membrane. Its function is as follows. Part of the ABC transporter complex PstSACB involved in phosphate import. The chain is Phosphate-binding protein PstS 3 (pstS2) from Mycobacterium leprae (strain TN).